Here is a 302-residue protein sequence, read N- to C-terminus: D-alanine--D-alanine ligase (302 aa).

In terms of domain architecture, ATP-grasp spans 104–296; that stretch reads KLVFERFAIP…FPDLVTWLVE (193 aa). 130–183 serves as a coordination point for ATP; the sequence is AMARPYVVKPLDQGSSVGVTIVTSETNDLPFSRDDWPYGRQVMVERFIPGRELT. 3 residues coordinate Mg(2+): aspartate 251, glutamate 263, and asparagine 265.

This sequence belongs to the D-alanine--D-alanine ligase family. The cofactor is Mg(2+). Mn(2+) serves as cofactor.

The protein resides in the cytoplasm. The catalysed reaction is 2 D-alanine + ATP = D-alanyl-D-alanine + ADP + phosphate + H(+). Its pathway is cell wall biogenesis; peptidoglycan biosynthesis. In terms of biological role, cell wall formation. This Rhodospirillum rubrum (strain ATCC 11170 / ATH 1.1.1 / DSM 467 / LMG 4362 / NCIMB 8255 / S1) protein is D-alanine--D-alanine ligase.